Reading from the N-terminus, the 243-residue chain is Cyclin-dependent kinase 20 (243 aa).

The Protein kinase domain maps to 4–243 (YCILGRIGEG…IHLSCRFLSV (240 aa)). ATP is bound by residues 10-18 (IGEGAHGIV) and Lys-33. The active-site Proton acceptor is Asp-127.

Belongs to the protein kinase superfamily. CMGC Ser/Thr protein kinase family. CDC2/CDKX subfamily. As to quaternary structure, monomer. Interacts with TBC1D32 and MAK.

Its subcellular location is the nucleus. It is found in the cytoplasm. The protein localises to the cell projection. It localises to the cilium. It carries out the reaction L-seryl-[protein] + ATP = O-phospho-L-seryl-[protein] + ADP + H(+). The enzyme catalyses L-threonyl-[protein] + ATP = O-phospho-L-threonyl-[protein] + ADP + H(+). Required for high-level Shh responses in the developing neural tube. Together with TBC1D32, controls the structure of the primary cilium by coordinating assembly of the ciliary membrane and axoneme, allowing GLI2 to be properly activated in response to SHH signaling. Involved in cell growth. Activates CDK2, a kinase involved in the control of the cell cycle, by phosphorylating residue 'Thr-160'. The sequence is that of Cyclin-dependent kinase 20 (CDK20) from Macaca mulatta (Rhesus macaque).